Consider the following 245-residue polypeptide: 1-(5-phosphoribosyl)-5-[(5-phosphoribosylamino)methylideneamino] imidazole-4-carboxamide isomerase (245 aa).

The Proton acceptor role is filled by D7. The Proton donor role is filled by D129.

This sequence belongs to the HisA/HisF family.

It is found in the cytoplasm. The enzyme catalyses 1-(5-phospho-beta-D-ribosyl)-5-[(5-phospho-beta-D-ribosylamino)methylideneamino]imidazole-4-carboxamide = 5-[(5-phospho-1-deoxy-D-ribulos-1-ylimino)methylamino]-1-(5-phospho-beta-D-ribosyl)imidazole-4-carboxamide. It participates in amino-acid biosynthesis; L-histidine biosynthesis; L-histidine from 5-phospho-alpha-D-ribose 1-diphosphate: step 4/9. The sequence is that of 1-(5-phosphoribosyl)-5-[(5-phosphoribosylamino)methylideneamino] imidazole-4-carboxamide isomerase from Salmonella arizonae (strain ATCC BAA-731 / CDC346-86 / RSK2980).